Reading from the N-terminus, the 118-residue chain is Ig heavy chain V region X24 (118 aa).

In terms of domain architecture, Ig-like spans 1 to 111 (EVKLLESGGG…GYFDYWGQGT (111 aa)).

The chain is Ig heavy chain V region X24 from Mus musculus (Mouse).